A 404-amino-acid polypeptide reads, in one-letter code: Formate-dependent phosphoribosylglycinamide formyltransferase (404 aa).

Residues 25 to 26 (EL) and Glu-85 each bind N(1)-(5-phospho-beta-D-ribosyl)glycinamide. Residues Arg-118, Lys-159, 164 to 169 (SSGKGQ), 199 to 202 (EGFI), and Glu-207 each bind ATP. The 196-residue stretch at 123–318 (RLAAEELGLP…EFELHARAIL (196 aa)) folds into the ATP-grasp domain. Positions 277 and 289 each coordinate Mg(2+). N(1)-(5-phospho-beta-D-ribosyl)glycinamide contacts are provided by residues Asp-296, Lys-365, and 372–373 (RR).

It belongs to the PurK/PurT family. As to quaternary structure, homodimer.

The enzyme catalyses N(1)-(5-phospho-beta-D-ribosyl)glycinamide + formate + ATP = N(2)-formyl-N(1)-(5-phospho-beta-D-ribosyl)glycinamide + ADP + phosphate + H(+). The protein operates within purine metabolism; IMP biosynthesis via de novo pathway; N(2)-formyl-N(1)-(5-phospho-D-ribosyl)glycinamide from N(1)-(5-phospho-D-ribosyl)glycinamide (formate route): step 1/1. Involved in the de novo purine biosynthesis. Catalyzes the transfer of formate to 5-phospho-ribosyl-glycinamide (GAR), producing 5-phospho-ribosyl-N-formylglycinamide (FGAR). Formate is provided by PurU via hydrolysis of 10-formyl-tetrahydrofolate. This Burkholderia mallei (strain NCTC 10247) protein is Formate-dependent phosphoribosylglycinamide formyltransferase.